We begin with the raw amino-acid sequence, 232 residues long: ATP-dependent Clp protease proteolytic subunit 2 (232 aa).

Ser124 (nucleophile) is an active-site residue. Residue His149 is part of the active site.

It belongs to the peptidase S14 family. In terms of assembly, fourteen ClpP subunits assemble into 2 heptameric rings which stack back to back to give a disk-like structure with a central cavity, resembling the structure of eukaryotic proteasomes.

It is found in the cytoplasm. It catalyses the reaction Hydrolysis of proteins to small peptides in the presence of ATP and magnesium. alpha-casein is the usual test substrate. In the absence of ATP, only oligopeptides shorter than five residues are hydrolyzed (such as succinyl-Leu-Tyr-|-NHMec, and Leu-Tyr-Leu-|-Tyr-Trp, in which cleavage of the -Tyr-|-Leu- and -Tyr-|-Trp bonds also occurs).. In terms of biological role, cleaves peptides in various proteins in a process that requires ATP hydrolysis. Has a chymotrypsin-like activity. Plays a major role in the degradation of misfolded proteins. The chain is ATP-dependent Clp protease proteolytic subunit 2 from Nostoc sp. (strain PCC 7120 / SAG 25.82 / UTEX 2576).